The primary structure comprises 606 residues: UvrABC system protein C (606 aa).

A GIY-YIG domain is found at S18–I96. The UVR domain maps to T205–I240.

It belongs to the UvrC family. In terms of assembly, interacts with UvrB in an incision complex.

The protein localises to the cytoplasm. Its function is as follows. The UvrABC repair system catalyzes the recognition and processing of DNA lesions. UvrC both incises the 5' and 3' sides of the lesion. The N-terminal half is responsible for the 3' incision and the C-terminal half is responsible for the 5' incision. The polypeptide is UvrABC system protein C (Nitrosospira multiformis (strain ATCC 25196 / NCIMB 11849 / C 71)).